The sequence spans 657 residues: DNA mismatch repair protein MutL (657 aa).

This sequence belongs to the DNA mismatch repair MutL/HexB family.

Its function is as follows. This protein is involved in the repair of mismatches in DNA. It is required for dam-dependent methyl-directed DNA mismatch repair. May act as a 'molecular matchmaker', a protein that promotes the formation of a stable complex between two or more DNA-binding proteins in an ATP-dependent manner without itself being part of a final effector complex. The polypeptide is DNA mismatch repair protein MutL (Streptococcus agalactiae serotype III (strain NEM316)).